A 145-amino-acid polypeptide reads, in one-letter code: uncharacterized protein (145 aa).

M1 carries the N-acetylmethionine modification. The segment at 15–41 is disordered; the sequence is QLKNNSGGTNGDRNSGANNGGGENSAP. Over residues 16–27 the composition is skewed to polar residues; it reads LKNNSGGTNGDR. Phosphoserine is present on residues S121 and S126. Positions 125–145 are disordered; it reads NSFDKQNAKNDDDEDDDDFFD. Residues 135 to 145 are compositionally biased toward acidic residues; it reads DDDEDDDDFFD.

Belongs to the PDCD5 family.

This is an uncharacterized protein from Saccharomyces cerevisiae (strain ATCC 204508 / S288c) (Baker's yeast).